The primary structure comprises 294 residues: Survival motor neuron protein (294 aa).

Positions 1–10 are enriched in gly residues; sequence MAMSSGGSGS. Residues 1–32 are disordered; that stretch reads MAMSSGGSGSGVPEQEDAVLFRRGTGQSDDSD. Ala2 carries the N-acetylalanine modification. Residues Ser4, Ser5, and Ser8 each carry the phosphoserine; by PKA modification. The segment at 13-44 is P1 (binding site for GEMIN2); it reads PEQEDAVLFRRGTGQSDDSDIWDDTALIKAYD. Residue Thr25 is modified to Phosphothreonine. Residues Ser28 and Ser31 each carry the phosphoserine modification. Lys51 participates in a covalent cross-link: Glycyl lysine isopeptide (Lys-Gly) (interchain with G-Cter in SUMO2). Residues 60-88 are disordered; sequence CETSGKSKTTPKRKPAKKNKSQKKNTAAS. Positions 68–82 are enriched in basic residues; it reads TTPKRKPAKKNKSQK. Position 69 is a phosphothreonine (Thr69). Thr85 carries the phosphothreonine; by PKA modification. Positions 91-151 constitute a Tudor domain; the sequence is QWKVGDKCSA…LSPICEVANN (61 aa). The interval 97–209 is required for interaction with RPP20/POP7; sequence KCSAIWSEDG…MPGPRLGPGK (113 aa). Low complexity predominate over residues 156 to 166; that stretch reads AQENENESQVS. The disordered stretch occupies residues 156 to 222; that stretch reads AQENENESQV…KFNGPPPPPP (67 aa). Position 187 is a phosphoserine; by PKA (Ser187). The segment covering 194-204 has biased composition (pro residues); the sequence is LPPPPPMPGPR. The span at 206 to 215 shows a compositional bias: low complexity; the sequence is GPGKPGLKFN. Lys209 is covalently cross-linked (Glycyl lysine isopeptide (Lys-Gly) (interchain with G-Cter in SUMO2)). Residues 240–267 are P2 (binding site for SM B); the sequence is PPIIPPPPPICPDSLDDADALGSMLISW. Residues 279-294 form a required for interaction with SYNCRIP region; the sequence is GFRQNQKEGRCSHSLN.

This sequence belongs to the SMN family. Homooligomer; may form higher order homooligomers in the dimer to octamer range. Part of the core SMN complex that contains SMN1, GEMIN2/SIP1, DDX20/GEMIN3, GEMIN4, GEMIN5, GEMIN6, GEMIN7, GEMIN8 and STRAP/UNRIP. Part of the SMN-Sm complex that contains SMN1, GEMIN2/SIP1, DDX20/GEMIN3, GEMIN4, GEMIN5, GEMIN6, GEMIN7, GEMIN8, STRAP/UNRIP and the Sm proteins SNRPB, SNRPD1, SNRPD2, SNRPD3, SNRPE, SNRPF and SNRPG. Component of an import snRNP complex composed of KPNB1, RNUT1, SMN1 and ZNF259. Interacts with DDX20, FBL, NOLA1, RNUT1, SYNCRIP and with several spliceosomal snRNP core Sm proteins, including SNRPB, SNRPD1, SNRPD2, SNRPD3, SNRPE and ILF3. Interacts with GEMIN2; the interaction is direct. Interacts with GEMIN3; the interaction is direct. Interacts with GEMIN8; the interaction is direct. Interacts with SNRPB; the interaction is direct. Interacts (via Tudor domain) with SNRPD1 (via C-terminus); the interaction is direct. Interacts with SNRPD2; the interaction is direct. Interacts (via Tudor domain) with SNRPD3 (via C-terminus); the interaction is direct. Interacts with SNRPE; the interaction is direct. Interacts with OSTF1, LSM10, LSM11 and RPP20/POP7. Interacts (via C-terminal region) with ZPR1 (via C-terminal region). Interacts (via Tudor domain) with COIL. Interacts with SETX; recruits SETX to POLR2A. Interacts with POLR2A (via the C-terminal domain (CTD)). Interacts with PRMT5. Interacts with XRN2. Interacts (via C-terminus) with FMR1 (via C-terminus); the interaction is direct and occurs in a RNA-independent manner. Interacts (via Tudor domain) with SF3B2 ('Arg-508'-methylated form). Interacts with WRAP53/TCAB1. Interacts (via Tudor domain) with ELAVL4 in an RNA-independent manner; the interaction is required for localization of ELAVL4 to RNA granules. Interacts with FRG1.

The protein resides in the nucleus. Its subcellular location is the gem. It is found in the cajal body. The protein localises to the cytoplasm. It localises to the cytoplasmic granule. The protein resides in the perikaryon. Its subcellular location is the cell projection. It is found in the neuron projection. The protein localises to the axon. It localises to the myofibril. The protein resides in the sarcomere. Its subcellular location is the z line. The SMN complex catalyzes the assembly of small nuclear ribonucleoproteins (snRNPs), the building blocks of the spliceosome, and thereby plays an important role in the splicing of cellular pre-mRNAs. Most spliceosomal snRNPs contain a common set of Sm proteins SNRPB, SNRPD1, SNRPD2, SNRPD3, SNRPE, SNRPF and SNRPG that assemble in a heptameric protein ring on the Sm site of the small nuclear RNA to form the core snRNP (Sm core). In the cytosol, the Sm proteins SNRPD1, SNRPD2, SNRPE, SNRPF and SNRPG are trapped in an inactive 6S pICln-Sm complex by the chaperone CLNS1A that controls the assembly of the core snRNP. To assemble core snRNPs, the SMN complex accepts the trapped 5Sm proteins from CLNS1A forming an intermediate. Binding of snRNA inside 5Sm ultimately triggers eviction of the SMN complex, thereby allowing binding of SNRPD3 and SNRPB to complete assembly of the core snRNP. Within the SMN complex, SMN1 acts as a structural backbone and together with GEMIN2 it gathers the Sm complex subunits. Ensures the correct splicing of U12 intron-containing genes that may be important for normal motor and proprioceptive neurons development. Also required for resolving RNA-DNA hybrids created by RNA polymerase II, that form R-loop in transcription terminal regions, an important step in proper transcription termination. May also play a role in the metabolism of small nucleolar ribonucleoprotein (snoRNPs). This chain is Survival motor neuron protein (SMN1), found in Pongo abelii (Sumatran orangutan).